A 130-amino-acid chain; its full sequence is Phosphoribosyl-AMP cyclohydrolase 1 (130 aa).

D77 contributes to the Mg(2+) binding site. Residue C78 coordinates Zn(2+). D79 and D81 together coordinate Mg(2+). Zn(2+) is bound by residues C95 and C102.

Belongs to the PRA-CH family. Homodimer. The cofactor is Mg(2+). Requires Zn(2+) as cofactor.

It localises to the cytoplasm. It carries out the reaction 1-(5-phospho-beta-D-ribosyl)-5'-AMP + H2O = 1-(5-phospho-beta-D-ribosyl)-5-[(5-phospho-beta-D-ribosylamino)methylideneamino]imidazole-4-carboxamide. The protein operates within amino-acid biosynthesis; L-histidine biosynthesis; L-histidine from 5-phospho-alpha-D-ribose 1-diphosphate: step 3/9. Functionally, catalyzes the hydrolysis of the adenine ring of phosphoribosyl-AMP. The polypeptide is Phosphoribosyl-AMP cyclohydrolase 1 (Pseudomonas fluorescens (strain ATCC BAA-477 / NRRL B-23932 / Pf-5)).